Consider the following 93-residue polypeptide: Small ribosomal subunit protein uS19 (93 aa).

Belongs to the universal ribosomal protein uS19 family.

In terms of biological role, protein S19 forms a complex with S13 that binds strongly to the 16S ribosomal RNA. The chain is Small ribosomal subunit protein uS19 from Rubrobacter xylanophilus (strain DSM 9941 / JCM 11954 / NBRC 16129 / PRD-1).